Reading from the N-terminus, the 130-residue chain is MAKAATRSRTKRAKRTVVDGIAHINATFNNTIITITDRQGNGLAWASAGGSGFRGSRKSTPFAAQVASERAGRAALDYGLKNLEVRVKGPGPGRESAVRALNAVGYRITNISDVSPIPHNGCRPPKKRRV.

The protein belongs to the universal ribosomal protein uS11 family. In terms of assembly, part of the 30S ribosomal subunit. Interacts with proteins S7 and S18. Binds to IF-3.

Its function is as follows. Located on the platform of the 30S subunit, it bridges several disparate RNA helices of the 16S rRNA. Forms part of the Shine-Dalgarno cleft in the 70S ribosome. The protein is Small ribosomal subunit protein uS11 of Alkalilimnicola ehrlichii (strain ATCC BAA-1101 / DSM 17681 / MLHE-1).